The following is a 521-amino-acid chain: uncharacterized protein (521 aa).

Residues 14–41 (QFQQMQHQMQQQQQQQMQQQQQQQQQQQ) are a coiled coil. 3 stretches are compositionally biased toward low complexity: residues 238-266 (LSGS…TSSS), 275-353 (SSTS…NNNN), and 423-482 (PRLS…PNNP). Disordered stretches follow at residues 238-357 (LSGS…ISGF) and 413-491 (TAVA…SNNG).

This is an uncharacterized protein from Dictyostelium discoideum (Social amoeba).